Here is a 254-residue protein sequence, read N- to C-terminus: Imidazole glycerol phosphate synthase subunit HisF (254 aa).

Catalysis depends on residues Asp12 and Asp131.

It belongs to the HisA/HisF family. In terms of assembly, heterodimer of HisH and HisF.

The protein resides in the cytoplasm. It catalyses the reaction 5-[(5-phospho-1-deoxy-D-ribulos-1-ylimino)methylamino]-1-(5-phospho-beta-D-ribosyl)imidazole-4-carboxamide + L-glutamine = D-erythro-1-(imidazol-4-yl)glycerol 3-phosphate + 5-amino-1-(5-phospho-beta-D-ribosyl)imidazole-4-carboxamide + L-glutamate + H(+). It participates in amino-acid biosynthesis; L-histidine biosynthesis; L-histidine from 5-phospho-alpha-D-ribose 1-diphosphate: step 5/9. Functionally, IGPS catalyzes the conversion of PRFAR and glutamine to IGP, AICAR and glutamate. The HisF subunit catalyzes the cyclization activity that produces IGP and AICAR from PRFAR using the ammonia provided by the HisH subunit. The protein is Imidazole glycerol phosphate synthase subunit HisF of Leifsonia xyli subsp. xyli (strain CTCB07).